The primary structure comprises 389 residues: Carbamoyl phosphate synthase small chain (389 aa).

Residues 1 to 199 form a CPSase region; sequence MFNPAILVLA…AGKPFNLQTT (199 aa). Positions 50, 251, and 253 each coordinate L-glutamine. Positions 203 to 389 constitute a Glutamine amidotransferase type-1 domain; the sequence is HVVAYDFGIK…FINAVQATKA (187 aa). Cys-279 (nucleophile) is an active-site residue. L-glutamine-binding residues include Leu-280, Gln-283, Asn-321, Gly-323, and Phe-324. Active-site residues include His-363 and Glu-365.

This sequence belongs to the CarA family. As to quaternary structure, composed of two chains; the small (or glutamine) chain promotes the hydrolysis of glutamine to ammonia, which is used by the large (or ammonia) chain to synthesize carbamoyl phosphate. Tetramer of heterodimers (alpha,beta)4.

The catalysed reaction is hydrogencarbonate + L-glutamine + 2 ATP + H2O = carbamoyl phosphate + L-glutamate + 2 ADP + phosphate + 2 H(+). The enzyme catalyses L-glutamine + H2O = L-glutamate + NH4(+). The protein operates within amino-acid biosynthesis; L-arginine biosynthesis; carbamoyl phosphate from bicarbonate: step 1/1. Its pathway is pyrimidine metabolism; UMP biosynthesis via de novo pathway; (S)-dihydroorotate from bicarbonate: step 1/3. Its function is as follows. Small subunit of the glutamine-dependent carbamoyl phosphate synthetase (CPSase). CPSase catalyzes the formation of carbamoyl phosphate from the ammonia moiety of glutamine, carbonate, and phosphate donated by ATP, constituting the first step of 2 biosynthetic pathways, one leading to arginine and/or urea and the other to pyrimidine nucleotides. The small subunit (glutamine amidotransferase) binds and cleaves glutamine to supply the large subunit with the substrate ammonia. The protein is Carbamoyl phosphate synthase small chain of Haemophilus ducreyi (strain 35000HP / ATCC 700724).